The primary structure comprises 194 residues: FAD-linked sulfhydryl oxidase ERV1 (194 aa).

The disordered stretch occupies residues 44–72 (LSLSLSPPPTPPSPPPPPPEVLKKDSKAA). The span at 49–63 (SPPPTPPSPPPPPPE) shows a compositional bias: pro residues. The region spanning 72-172 (APLTKEEVGR…FPCQRVNARW (101 aa)) is the ERV/ALR sulfhydryl oxidase domain. FAD is bound by residues lysine 76, arginine 81, tryptophan 84, glutamate 121, histidine 125, cysteine 148, histidine 151, asparagine 152, asparagine 155, lysine 160, and arginine 171. An intrachain disulfide couples cysteine 119 to cysteine 122. A disulfide bridge links cysteine 148 with cysteine 165. A disulfide bridge links cysteine 177 with cysteine 182. The short motif at 177 to 182 (CPERSC) is the Required for dimerization and substrate specificity element.

Homodimer. FAD is required as a cofactor. Contains three disulfide bonds; one catalytic disulfide (Cys-119 to Cys-122), one structural disulfide (Cys-148 to Cys-165), and one shuttle disulfide (Cys-177 to Cys-182).

It localises to the mitochondrion. The enzyme catalyses 2 R'C(R)SH + O2 = R'C(R)S-S(R)CR' + H2O2. In terms of biological role, FAD-dependent sulfhydryl oxidase that catalyzes disulfide bond formation. Oxidizes thioredoxin in vitro. Required for the import and folding of small cysteine-containing proteins in the mitochondrial intermembrane space, and can act independently of the oxidoreductase MIA40. Can oxidize the cytochrome c oxidase assembly protein COX19, a typical substrate of MIA40. This is FAD-linked sulfhydryl oxidase ERV1 from Oryza sativa subsp. japonica (Rice).